The primary structure comprises 532 residues: Exodeoxyribonuclease 7 large subunit (532 aa).

Residues 497–532 (AITTGEGTPAPETAAAPKKKPAKPASSDPGNQGNLF) form a disordered region. Residues 499-512 (TTGEGTPAPETAAA) show a composition bias toward low complexity.

The protein belongs to the XseA family. Heterooligomer composed of large and small subunits.

The protein localises to the cytoplasm. It carries out the reaction Exonucleolytic cleavage in either 5'- to 3'- or 3'- to 5'-direction to yield nucleoside 5'-phosphates.. Functionally, bidirectionally degrades single-stranded DNA into large acid-insoluble oligonucleotides, which are then degraded further into small acid-soluble oligonucleotides. In Agrobacterium fabrum (strain C58 / ATCC 33970) (Agrobacterium tumefaciens (strain C58)), this protein is Exodeoxyribonuclease 7 large subunit.